A 703-amino-acid chain; its full sequence is Lethal(3)malignant brain tumor-like protein 2 (703 aa).

Residues 1-70 (MEKPRGTEET…AGELPTSPLH (70 aa)) are disordered. Ser13 is subject to Phosphoserine. Residues 15–25 (PMEEEEDDDLE) show a composition bias toward acidic residues. Residues 35–49 (SYNSSAGSESSSYLE) are compositionally biased toward low complexity. The segment covering 50–60 (ESSEAENEDRE) has biased composition (acidic residues). The residue at position 67 (Ser67) is a Phosphoserine. An FCS-type zinc finger spans residues 81-116 (DGSGSEPAVCEMCGIVGTREAFFSKTKRFCSVSCSR). Residues Cys90, Cys93, Cys110, and Cys114 each contribute to the Zn(2+) site. MBT repeat units follow at residues 179–283 (FDWG…LVPP), 291–391 (TDWK…IKMS), 397–500 (MSHH…LTPP), and 508–604 (FDWE…LQPP). Residue Ser338 is modified to Phosphoserine. Lys405 participates in a covalent cross-link: Glycyl lysine isopeptide (Lys-Gly) (interchain with G-Cter in SUMO2). Disordered regions lie at residues 604 to 649 (PVSA…KKPL) and 672 to 703 (VKEE…ERDS). Over residues 619-634 (TKKKKKQFGKKRKRIP) the composition is skewed to basic residues. Residues Lys647 and Lys673 each participate in a glycyl lysine isopeptide (Lys-Gly) (interchain with G-Cter in SUMO2) cross-link. Ser681, Ser685, and Ser687 each carry phosphoserine. Lys698 participates in a covalent cross-link: Glycyl lysine isopeptide (Lys-Gly) (interchain with G-Cter in SUMO1); alternate. Residue Lys698 forms a Glycyl lysine isopeptide (Lys-Gly) (interchain with G-Cter in SUMO2); alternate linkage.

Part of the E2F6.com-1 complex in G0 phase composed of E2F6, MGA, MAX, TFDP1, CBX3, BAT8, EUHMTASE1, RING1, RNF2, MBLR, BAT8 and YAF2.

Its subcellular location is the nucleus. In terms of biological role, putative Polycomb group (PcG) protein. PcG proteins maintain the transcriptionally repressive state of genes, probably via a modification of chromatin, rendering it heritably changed in its expressibility. Its association with a chromatin-remodeling complex suggests that it may contribute to prevent expression of genes that trigger the cell into mitosis. Binds to monomethylated and dimethylated 'Lys-20' on histone H4. Binds histone H3 peptides that are monomethylated or dimethylated on 'Lys-4', 'Lys-9' or 'Lys-27'. This is Lethal(3)malignant brain tumor-like protein 2 (L3mbtl2) from Rattus norvegicus (Rat).